The sequence spans 268 residues: 4-hydroxy-tetrahydrodipicolinate reductase (268 aa).

NAD(+) is bound by residues 10–15 (GASGRM) and Asp-36. Residue Arg-37 participates in NADP(+) binding. NAD(+) is bound by residues 99 to 101 (GTT) and 123 to 126 (SANM). Residue His-156 is the Proton donor/acceptor of the active site. (S)-2,3,4,5-tetrahydrodipicolinate is bound at residue His-157. Lys-160 (proton donor) is an active-site residue. (S)-2,3,4,5-tetrahydrodipicolinate is bound at residue 166-167 (GT).

Belongs to the DapB family.

The protein localises to the cytoplasm. The enzyme catalyses (S)-2,3,4,5-tetrahydrodipicolinate + NAD(+) + H2O = (2S,4S)-4-hydroxy-2,3,4,5-tetrahydrodipicolinate + NADH + H(+). The catalysed reaction is (S)-2,3,4,5-tetrahydrodipicolinate + NADP(+) + H2O = (2S,4S)-4-hydroxy-2,3,4,5-tetrahydrodipicolinate + NADPH + H(+). It functions in the pathway amino-acid biosynthesis; L-lysine biosynthesis via DAP pathway; (S)-tetrahydrodipicolinate from L-aspartate: step 4/4. Catalyzes the conversion of 4-hydroxy-tetrahydrodipicolinate (HTPA) to tetrahydrodipicolinate. This Burkholderia thailandensis (strain ATCC 700388 / DSM 13276 / CCUG 48851 / CIP 106301 / E264) protein is 4-hydroxy-tetrahydrodipicolinate reductase.